The chain runs to 109 residues: Large ribosomal subunit protein uL22 (109 aa).

It belongs to the universal ribosomal protein uL22 family. In terms of assembly, part of the 50S ribosomal subunit.

In terms of biological role, this protein binds specifically to 23S rRNA; its binding is stimulated by other ribosomal proteins, e.g. L4, L17, and L20. It is important during the early stages of 50S assembly. It makes multiple contacts with different domains of the 23S rRNA in the assembled 50S subunit and ribosome. The globular domain of the protein is located near the polypeptide exit tunnel on the outside of the subunit, while an extended beta-hairpin is found that lines the wall of the exit tunnel in the center of the 70S ribosome. The sequence is that of Large ribosomal subunit protein uL22 from Thiobacillus denitrificans (strain ATCC 25259 / T1).